We begin with the raw amino-acid sequence, 297 residues long: Protein BCCIP homolog (297 aa).

The interval 1–40 is disordered; sequence MSANKQKKLSTMEVDPNEDVSSSSEDDDDDEPHPDAYKGN.

The protein belongs to the BCP1 family.

The protein is Protein BCCIP homolog of Drosophila melanogaster (Fruit fly).